Here is a 294-residue protein sequence, read N- to C-terminus: MSFPEGKDILLMGNEAAKAAEAFQRSLKKIGHRRTQSIVGDKIITVSETVEKPTISKSTKVTTPPERRNAWGEKPDTTRNQTEEARNEATLEDTSRLYEEVFAPTSDGKTPAEEGMETPEKPKKKVTFKNDESGRYTKLEMEALELLSDNEDDDAESSVLTFEEKDTSALSLEARLESIDEKLSMILGLLRTLNVATAGPTAARDGIRDAMVGLREELIADIIKEAKGKAAEMMKEEAKQKSKIGNGSVGLTEKAKELNKIVEDESTSGESEEEEEEEDEEESNPDDDLYSLTM.

The segment at 12-28 (MGNEAAKAAEAFQRSLK) is binding to monomeric RNA-free nucleoprotein. The disordered stretch occupies residues 52–97 (KPTISKSTKVTTPPERRNAWGEKPDTTRNQTEEARNEATLEDTSRL). Over residues 65-97 (PERRNAWGEKPDTTRNQTEEARNEATLEDTSRL) the composition is skewed to basic and acidic residues. The residue at position 106 (Ser106) is a Phosphoserine. The interval 123–128 (KKKVTF) is binding to host phosphatase PP1. Positions 135 to 157 (RYTKLEMEALELLSDNEDDDAES) are binding to protein M2-1. Phosphoserine occurs at positions 148, 157, 158, 168, and 171. The oligomerization and binding to RNA-directed RNA polymerase L stretch occupies residues 169–194 (ALSLEARLESIDEKLSMILGLLRTLN). The tract at residues 234–294 (MKEEAKQKSK…PDDDLYSLTM (61 aa)) is disordered. Residues 251 to 279 (LTEKAKELNKIVEDESTSGESEEEEEEED) are binding to RNA-directed RNA polymerase L. Residues 253-263 (EKAKELNKIVE) are compositionally biased toward basic and acidic residues. Acidic residues predominate over residues 264–294 (DESTSGESEEEEEEEDEEESNPDDDLYSLTM). Residues 281–294 (EESNPDDDLYSLTM) are binding to the N-RNA complex.

Belongs to the pneumoviridae phosphoprotein P family. Homotetramer. Interacts with protein M2-1; the interaction between the two tetramers is required for the anti-termination and elongation transcriptional activities of protein M2-1. Interacts with host phosphatase PP1; this interaction recruits PP1 to the inclusion bodies. Formation of a complex PP1/M2-1/P allows P to target host PP1 phosphatase to the M2-1 substrate. Interacts with the nucleoprotein N; the phosphorylated phosphoprotein P binds to N-RNA complex. Interacts with the monomeric RNA-free nucleoprotein N. Interacts with RNA-directed RNA polymerase L (via N-terminus); the association of P and L forms the polymerase complex. In terms of processing, constitutively phosphorylated by host.

The protein resides in the virion. The protein localises to the host cytoplasm. Plays critical roles in regulating RNA replication and transcription through its interactions with multiple proteins. Tethers the RNA-directed RNA polymerase L to the nucleoprotein-RNA complex. Recruits the M2-1 protein, a processivity factor that is required for efficient transcription of viral RNA. Acts as a chaperone for neo-synthesized nucleoprotein by forming an N-P complex that preserves N in a monomeric and RNA-free state and prevents the association of nascent N with host cell RNAs. Recruits the host phosphatase PP1 to inclusion bodies to regulate viral transcription. This is Phosphoprotein from Avian metapneumovirus (isolate Canada goose/Minnesota/15a/2001) (AMPV).